Here is a 627-residue protein sequence, read N- to C-terminus: uncharacterized protein (627 aa).

This is an uncharacterized protein from Caenorhabditis elegans.